A 260-amino-acid chain; its full sequence is Granzyme A (260 aa).

Residues 1–26 (MRNASGPRGPSLATLLFLLLIPEGGC) form the signal peptide. The propeptide at 27-28 (ER) is activation peptide. A Peptidase S1 domain is found at 29–257 (IIGGDTVVPH…HLNWIKKIMK (229 aa)). Residues Cys54 and Cys70 are joined by a disulfide bond. Active-site charge relay system residues include His69 and Asp113. Intrachain disulfides connect Cys147–Cys217, Cys178–Cys196, and Cys207–Cys232. 2 N-linked (GlcNAc...) asparagine glycosylation sites follow: Asn157 and Asn169. Ser211 acts as the Charge relay system in catalysis.

It belongs to the peptidase S1 family. Granzyme subfamily. In terms of assembly, homodimer; disulfide-linked. Interacts with APEX1. In terms of tissue distribution, found in cytotoxic lymphocytes and in normal lymphoid tissues such as thymus and spleen. More abundant in lymphoid tissues than isoform HF2.

Its subcellular location is the secreted. The protein resides in the cytoplasmic granule. It catalyses the reaction Hydrolysis of proteins, including fibronectin, type IV collagen and nucleolin. Preferential cleavage: -Arg-|-Xaa-, -Lys-|-Xaa- &gt;&gt; -Phe-|-Xaa- in small molecule substrates.. Its function is as follows. Abundant protease in the cytosolic granules of cytotoxic T-cells and NK-cells which activates caspase-independent pyroptosis when delivered into the target cell through the immunological synapse. It cleaves after Lys or Arg. Cleaves APEX1 after 'Lys-31' and destroys its oxidative repair activity. Cleaves the nucleosome assembly protein SET after 'Lys-189', which disrupts its nucleosome assembly activity and allows the SET complex to translocate into the nucleus to nick and degrade the DNA. This Mus musculus (Mouse) protein is Granzyme A (Gzma).